The following is a 73-amino-acid chain: Antitoxin VapB2 (73 aa).

Forms a homodimer, which binds to a toxin homodimer, which then oligomerizes further to a hetero-octamer. When bound to toxin VapC2 the toxin activity is inhibited; 1 antitoxin may suffice to inhibit toxin.

Antitoxin component of a type II toxin-antitoxin (TA) system. Upon expression in M.smegmatis neutralizes the effect of cognate toxin VapC2. The C-terminal helix of the antitoxin may obstruct the toxin's RNA-binding groove, blocking access to the active sites. Additionally, the C-terminal arginine of the antitoxin may remove Mg(2+) ions from the toxin active sites. The protein is Antitoxin VapB2 (vapB2) of Mycobacterium tuberculosis (strain ATCC 25618 / H37Rv).